Here is a 482-residue protein sequence, read N- to C-terminus: PHD finger protein At3g20280 (482 aa).

The PHD-type zinc-finger motif lies at 45–97 (AMACQICEVTINEMDTLLICDACEKAYHLKCLQGNNMKGVPKSEWHCSRCVQA). Disordered regions lie at residues 188–210 (TNIGSQGSKENVACGANSPAPVS) and 314–482 (SSNS…ENAA). The span at 314-324 (SSNSQQAVSHS) shows a compositional bias: low complexity. Composition is skewed to polar residues over residues 377–386 (ACQNHPTASP) and 393–428 (QDSTITAAPSVTQEDSAFNTEKTPPQPLSVSSNYDS). Basic and acidic residues predominate over residues 447–482 (DSEKGKGLNGLDDRHQEQPSEPEFYKSDSVKEENAA).

The chain is PHD finger protein At3g20280 from Arabidopsis thaliana (Mouse-ear cress).